Consider the following 467-residue polypeptide: Citrate synthase, mitochondrial (467 aa).

Residues His-301 and His-347 contribute to the active site.

It belongs to the citrate synthase family.

It is found in the mitochondrion matrix. The enzyme catalyses oxaloacetate + acetyl-CoA + H2O = citrate + CoA + H(+). It functions in the pathway carbohydrate metabolism; tricarboxylic acid cycle; isocitrate from oxaloacetate: step 1/2. The polypeptide is Citrate synthase, mitochondrial (CIT) (Candida tropicalis (Yeast)).